We begin with the raw amino-acid sequence, 318 residues long: Probable cell division protein WhiA (318 aa).

The segment at residues 281 to 314 (SLKELGQMLVPPVGKSGVNHRLRKIEEISKKLKE) is a DNA-binding region (H-T-H motif).

Belongs to the WhiA family.

Functionally, involved in cell division and chromosome segregation. This Thermoanaerobacter pseudethanolicus (strain ATCC 33223 / 39E) (Clostridium thermohydrosulfuricum) protein is Probable cell division protein WhiA.